Reading from the N-terminus, the 334-residue chain is N-acetyl-gamma-glutamyl-phosphate reductase (334 aa).

The active site involves C154.

It belongs to the NAGSA dehydrogenase family. Type 1 subfamily.

It localises to the cytoplasm. The catalysed reaction is N-acetyl-L-glutamate 5-semialdehyde + phosphate + NADP(+) = N-acetyl-L-glutamyl 5-phosphate + NADPH + H(+). It functions in the pathway amino-acid biosynthesis; L-arginine biosynthesis; N(2)-acetyl-L-ornithine from L-glutamate: step 3/4. Its function is as follows. Catalyzes the NADPH-dependent reduction of N-acetyl-5-glutamyl phosphate to yield N-acetyl-L-glutamate 5-semialdehyde. In Pectobacterium carotovorum subsp. carotovorum (strain PC1), this protein is N-acetyl-gamma-glutamyl-phosphate reductase.